The primary structure comprises 118 residues: Large ribosomal subunit protein bL20 (118 aa).

The protein belongs to the bacterial ribosomal protein bL20 family.

Its function is as follows. Binds directly to 23S ribosomal RNA and is necessary for the in vitro assembly process of the 50S ribosomal subunit. It is not involved in the protein synthesizing functions of that subunit. This Leptothrix cholodnii (strain ATCC 51168 / LMG 8142 / SP-6) (Leptothrix discophora (strain SP-6)) protein is Large ribosomal subunit protein bL20.